A 307-amino-acid polypeptide reads, in one-letter code: Metapyrocatechase (307 aa).

2 VOC domains span residues 7–122 (RPGH…LYAD) and 150–269 (RFDH…VFCG). The Fe cation site is built by His-153, His-214, and Glu-265.

Belongs to the extradiol ring-cleavage dioxygenase family. Homotetramer. Fe(2+) serves as cofactor.

It catalyses the reaction catechol + O2 = (2Z,4E)-2-hydroxy-6-oxohexa-2,4-dienoate + H(+). Its pathway is xenobiotic degradation; toluene degradation. In Pseudomonas putida (Arthrobacter siderocapsulatus), this protein is Metapyrocatechase (xylE).